The sequence spans 469 residues: MMKNRVTNIHFVGIGGVGMSGIAEVLHNLGFKVSGSDQARNAATEHLGSLGIQVYPGHTAEHVNGADVVVTSTAVKKENPEVVAALEQQIPVIPRALMLAELMRFRDGIAIAGTHGKTTTTSLTASILGAAGLDPTFVIGGKLNAAGTNARLGKGEYIVAEADESDASFLHLTPIMSVVTNIDEDHMDTYGHSVEKLHQAFIDFIHRMPFYGKAFLCIDSEHVRAILPKVSKPYATYGLDDTADIYATDIENVGAQMKFTVHVQMKGHEQGSFEVVLNMPGRHNVLNALAAIGVALEVGASVEAIQKGLLGFEGVGRRFQKYGDIKLPNGGTALLVDDYGHHPVEMAATLSAARGAYPEKRLVLAFQPHRYTRTRDLFEDFTKVLNTVDALVLTEVYAAGEEPIAAADSRALARAIRVLGKLEPIYCENVADLPEMLLNVLQDGDIVLNMGAGSINRVPAALLELSKQI.

Residue 113–119 coordinates ATP; sequence GTHGKTT.

Belongs to the MurCDEF family.

The protein resides in the cytoplasm. It catalyses the reaction UDP-N-acetyl-alpha-D-muramate + L-alanine + ATP = UDP-N-acetyl-alpha-D-muramoyl-L-alanine + ADP + phosphate + H(+). Its pathway is cell wall biogenesis; peptidoglycan biosynthesis. Functionally, cell wall formation. The chain is UDP-N-acetylmuramate--L-alanine ligase from Neisseria meningitidis serogroup A / serotype 4A (strain DSM 15465 / Z2491).